The sequence spans 272 residues: HMP-PP phosphatase (272 aa).

Residue Asp8 is the Nucleophile of the active site. Mg(2+)-binding residues include Asp8, Asp10, and Asp212.

The protein belongs to the HAD-like hydrolase superfamily. Cof family. The cofactor is Mg(2+).

The enzyme catalyses 4-amino-2-methyl-5-(diphosphooxymethyl)pyrimidine + H2O = 4-amino-2-methyl-5-(phosphooxymethyl)pyrimidine + phosphate + H(+). Its function is as follows. Catalyzes the hydrolysis of 4-amino-2-methyl-5-hydroxymethylpyrimidine pyrophosphate (HMP-PP) to 4-amino-2-methyl-5-hydroxymethylpyrimidine phosphate (HMP-P). This chain is HMP-PP phosphatase, found in Escherichia coli (strain 55989 / EAEC).